The sequence spans 365 residues: Sulfate/thiosulfate import ATP-binding protein CysA (365 aa).

The ABC transporter domain occupies 3–237; the sequence is IEIANIKKSF…PATRFVLEFM (235 aa). 35–42 lines the ATP pocket; sequence GPSGSGKT.

It belongs to the ABC transporter superfamily. Sulfate/tungstate importer (TC 3.A.1.6) family. In terms of assembly, the complex is composed of two ATP-binding proteins (CysA), two transmembrane proteins (CysT and CysW) and a solute-binding protein (CysP).

The protein localises to the cell inner membrane. It catalyses the reaction sulfate(out) + ATP + H2O = sulfate(in) + ADP + phosphate + H(+). The catalysed reaction is thiosulfate(out) + ATP + H2O = thiosulfate(in) + ADP + phosphate + H(+). In terms of biological role, part of the ABC transporter complex CysAWTP involved in sulfate/thiosulfate import. Responsible for energy coupling to the transport system. The polypeptide is Sulfate/thiosulfate import ATP-binding protein CysA (Escherichia coli O157:H7).